The primary structure comprises 447 residues: Tryptophan synthase beta chain (447 aa).

The residue at position 92 (lysine 92) is an N6-(pyridoxal phosphate)lysine. A disordered region spans residues 408-447; that stretch reads GLAVKGGEQPKEFSDGPPLGKLAPSGGSAVREATSVGARK.

The protein belongs to the TrpB family. As to quaternary structure, tetramer of two alpha and two beta chains. Requires pyridoxal 5'-phosphate as cofactor.

The enzyme catalyses (1S,2R)-1-C-(indol-3-yl)glycerol 3-phosphate + L-serine = D-glyceraldehyde 3-phosphate + L-tryptophan + H2O. Its pathway is amino-acid biosynthesis; L-tryptophan biosynthesis; L-tryptophan from chorismate: step 5/5. Functionally, the beta subunit is responsible for the synthesis of L-tryptophan from indole and L-serine. In Polaromonas sp. (strain JS666 / ATCC BAA-500), this protein is Tryptophan synthase beta chain.